The primary structure comprises 149 residues: Transcriptional repressor NrdR (149 aa).

Residues 3 to 34 (CPFCAAVDTKVIDSRLVGDGSQVRRRRQCLEC) fold into a zinc finger. The ATP-cone domain occupies 49–139 (PRVIKSDDIR…VYRSFEDIRE (91 aa)).

Belongs to the NrdR family. Requires Zn(2+) as cofactor.

Negatively regulates transcription of bacterial ribonucleotide reductase nrd genes and operons by binding to NrdR-boxes. The chain is Transcriptional repressor NrdR from Photorhabdus laumondii subsp. laumondii (strain DSM 15139 / CIP 105565 / TT01) (Photorhabdus luminescens subsp. laumondii).